Here is a 203-residue protein sequence, read N- to C-terminus: NADH-quinone oxidoreductase subunit C (203 aa).

This sequence belongs to the complex I 30 kDa subunit family. In terms of assembly, NDH-1 is composed of 14 different subunits. Subunits NuoB, C, D, E, F, and G constitute the peripheral sector of the complex.

The protein localises to the cell inner membrane. The enzyme catalyses a quinone + NADH + 5 H(+)(in) = a quinol + NAD(+) + 4 H(+)(out). Functionally, NDH-1 shuttles electrons from NADH, via FMN and iron-sulfur (Fe-S) centers, to quinones in the respiratory chain. The immediate electron acceptor for the enzyme in this species is believed to be ubiquinone. Couples the redox reaction to proton translocation (for every two electrons transferred, four hydrogen ions are translocated across the cytoplasmic membrane), and thus conserves the redox energy in a proton gradient. In Methylibium petroleiphilum (strain ATCC BAA-1232 / LMG 22953 / PM1), this protein is NADH-quinone oxidoreductase subunit C.